Consider the following 362-residue polypeptide: Phosphoserine aminotransferase (362 aa).

Residues serine 9 and arginine 42 each contribute to the L-glutamate site. Pyridoxal 5'-phosphate is bound by residues 76 to 77 (GR), tryptophan 102, threonine 153, aspartate 174, and glutamine 197. At lysine 198 the chain carries N6-(pyridoxal phosphate)lysine. 239-240 (NT) is a pyridoxal 5'-phosphate binding site.

It belongs to the class-V pyridoxal-phosphate-dependent aminotransferase family. SerC subfamily. As to quaternary structure, homodimer. Pyridoxal 5'-phosphate is required as a cofactor.

It is found in the cytoplasm. The catalysed reaction is O-phospho-L-serine + 2-oxoglutarate = 3-phosphooxypyruvate + L-glutamate. It carries out the reaction 4-(phosphooxy)-L-threonine + 2-oxoglutarate = (R)-3-hydroxy-2-oxo-4-phosphooxybutanoate + L-glutamate. Its pathway is amino-acid biosynthesis; L-serine biosynthesis; L-serine from 3-phospho-D-glycerate: step 2/3. It functions in the pathway cofactor biosynthesis; pyridoxine 5'-phosphate biosynthesis; pyridoxine 5'-phosphate from D-erythrose 4-phosphate: step 3/5. Its function is as follows. Catalyzes the reversible conversion of 3-phosphohydroxypyruvate to phosphoserine and of 3-hydroxy-2-oxo-4-phosphonooxybutanoate to phosphohydroxythreonine. The polypeptide is Phosphoserine aminotransferase (Escherichia coli O6:K15:H31 (strain 536 / UPEC)).